The primary structure comprises 485 residues: Hexokinase (485 aa).

The residue at position 15 (Ser15) is a Phosphoserine. The region spanning 21–468 (ANLMEQIHGL…SGVGAAIIAC (448 aa)) is the Hexokinase domain. Positions 75 to 208 (TGKETGDFLA…NIPINVVALI (134 aa)) are hexokinase small subdomain. An ATP-binding site is contributed by Lys111. Positions 151 to 177 (PLGFTFSYPASQKKINSGVLQRWTKGF) are glucose-binding. The tract at residues 209 to 457 (NDTTGTLVAS…HPIQLVAAED (249 aa)) is hexokinase large subdomain.

Monomer and homodimer. The monomeric form is active, the homodimeric form inactive.

It catalyses the reaction a D-hexose + ATP = a D-hexose 6-phosphate + ADP + H(+). The catalysed reaction is D-fructose + ATP = D-fructose 6-phosphate + ADP + H(+). It carries out the reaction D-glucose + ATP = D-glucose 6-phosphate + ADP + H(+). The protein operates within carbohydrate metabolism; hexose metabolism. It functions in the pathway carbohydrate degradation; glycolysis; D-glyceraldehyde 3-phosphate and glycerone phosphate from D-glucose: step 1/4. Catalyzes the phosphorylation of hexose, such as D-glucose and D-fructose, to hexose 6-phosphate (D-glucose 6-phosphate and D-fructose 6-phosphate, respectively). Has higher affinity for D-glucose. Mediates the initial step of glycolysis by catalyzing phosphorylation of D-glucose to D-glucose 6-phosphate. The sequence is that of Hexokinase (RAG5) from Kluyveromyces lactis (strain ATCC 8585 / CBS 2359 / DSM 70799 / NBRC 1267 / NRRL Y-1140 / WM37) (Yeast).